A 321-amino-acid chain; its full sequence is Mas-related G-protein coupled receptor member H (321 aa).

The Extracellular portion of the chain corresponds to 1 to 35 (MEPLAMTLYPLESTQPTRNKTPNETTWSSEHTDDH). N23 is a glycosylation site (N-linked (GlcNAc...) asparagine). Residues 36-56 (TYFLVSLVICSLGLAGNGLLI) traverse the membrane as a helical segment. At 57 to 71 (WFLIFCIKRKPFTIY) the chain is on the cytoplasmic side. The helical transmembrane segment at 72–92 (ILHLAIADFMVLLCSSIMKLV) threads the bilayer. The Extracellular segment spans residues 93 to 102 (NTFHIYNMTL). Residue N99 is glycosylated (N-linked (GlcNAc...) asparagine). Residues 103–126 (ESYAILFMIFGYNTGLHLLTAISV) form a helical membrane-spanning segment. Over 127–147 (ERCLSVLYPIWYQCQRPKHQS) the chain is Cytoplasmic. The chain crosses the membrane as a helical span at residues 148 to 168 (AVACMLLWALSVLVSGLENFF). Residues 169–188 (CILEVKPQFPECRYVYIFSC) lie on the Extracellular side of the membrane. A helical membrane pass occupies residues 189-209 (ILTFLVFVPLMIFSNLILFIQ). The Cytoplasmic portion of the chain corresponds to 210–225 (VCCNLKPRQPTKLYVI). The helical transmembrane segment at 226–246 (IMTTVILFLVFAMPMKVLLII) threads the bilayer. A topological domain (extracellular) is located at residue G247. A helical membrane pass occupies residues 248-271 (YYSSSLDDSVWDSLPYLNMLSTIN). Residues 272–320 (CSINPIVYFVVGSLRRKRSRKSLKEALQKVFEEKPVVASRENVTQFSLP) are Cytoplasmic-facing.

This sequence belongs to the G-protein coupled receptor 1 family. Mas subfamily.

The protein resides in the cell membrane. Orphan receptor. May regulate nociceptor function and/or development, including the sensation or modulation of pain. The polypeptide is Mas-related G-protein coupled receptor member H (Mrgprh) (Mus musculus (Mouse)).